Consider the following 165-residue polypeptide: 3-isopropylmalate dehydratase small subunit 2 (165 aa).

Belongs to the LeuD family. LeuD type 2 subfamily. In terms of assembly, heterodimer of LeuC and LeuD.

The enzyme catalyses (2R,3S)-3-isopropylmalate = (2S)-2-isopropylmalate. Its pathway is amino-acid biosynthesis; L-leucine biosynthesis; L-leucine from 3-methyl-2-oxobutanoate: step 2/4. Functionally, catalyzes the isomerization between 2-isopropylmalate and 3-isopropylmalate, via the formation of 2-isopropylmaleate. This Archaeoglobus fulgidus (strain ATCC 49558 / DSM 4304 / JCM 9628 / NBRC 100126 / VC-16) protein is 3-isopropylmalate dehydratase small subunit 2 (leuD2).